Consider the following 923-residue polypeptide: DNA mismatch repair protein MutS (923 aa).

Gly-671–Ser-678 is a binding site for ATP.

Belongs to the DNA mismatch repair MutS family.

In terms of biological role, this protein is involved in the repair of mismatches in DNA. It is possible that it carries out the mismatch recognition step. This protein has a weak ATPase activity. This is DNA mismatch repair protein MutS from Rhodopseudomonas palustris (strain BisB5).